The chain runs to 313 residues: MLNREPLTKEEALTIFESSELDTFDLLNEAYTVRKHYYGKKVKLNMILNAKSGICAEDCGYCGQSVKMKEKQRYALVEQDQIKEGAQVATENQIGTYCIVMSGRGPSNREVDHICETVEDIKKIHPQLKICACLGLTKEEQAKKLKAAGVDRYNHNLNTSERYHDEVVTTHTYEDRVNTVEMMKDNNISPCSGVICGMGESNEDIIDMAFALRAIDADSIPINFLHPIKGTKFGGLDLLSPMKCLRIIAMFRLINPTKEIRIAGGREVNLRSLQPLALKAANSIFVGDYLITGGQPNEEDYRMIEDLGFEIDS.

Residues 37–263 form the Radical SAM core domain; it reads YYGKKVKLNM…INPTKEIRIA (227 aa). Positions 55, 59, and 62 each coordinate [4Fe-4S] cluster. Positions 98, 131, 191, and 261 each coordinate [2Fe-2S] cluster.

Belongs to the radical SAM superfamily. Biotin synthase family. Homodimer. It depends on [4Fe-4S] cluster as a cofactor. [2Fe-2S] cluster serves as cofactor.

The enzyme catalyses (4R,5S)-dethiobiotin + (sulfur carrier)-SH + 2 reduced [2Fe-2S]-[ferredoxin] + 2 S-adenosyl-L-methionine = (sulfur carrier)-H + biotin + 2 5'-deoxyadenosine + 2 L-methionine + 2 oxidized [2Fe-2S]-[ferredoxin]. It participates in cofactor biosynthesis; biotin biosynthesis; biotin from 7,8-diaminononanoate: step 2/2. Functionally, catalyzes the conversion of dethiobiotin (DTB) to biotin by the insertion of a sulfur atom into dethiobiotin via a radical-based mechanism. The chain is Biotin synthase from Staphylococcus epidermidis (strain ATCC 12228 / FDA PCI 1200).